Consider the following 525-residue polypeptide: Glutamyl-tRNA(Gln) amidotransferase subunit A, mitochondrial (525 aa).

Active-site charge relay system residues include Lys-76 and Ser-168. Ser-192 acts as the Acyl-ester intermediate in catalysis.

This sequence belongs to the amidase family. GatA subfamily. In terms of assembly, subunit of the heterotrimeric GatCAB amidotransferase (AdT) complex, composed of A (QRSL1), B (GATB) and C (GATC) subunits.

Its subcellular location is the mitochondrion. The catalysed reaction is L-glutamyl-tRNA(Gln) + L-glutamine + ATP + H2O = L-glutaminyl-tRNA(Gln) + L-glutamate + ADP + phosphate + H(+). In terms of biological role, allows the formation of correctly charged Gln-tRNA(Gln) through the transamidation of misacylated Glu-tRNA(Gln) in the mitochondria. The reaction takes place in the presence of glutamine and ATP through an activated gamma-phospho-Glu-tRNA(Gln). The protein is Glutamyl-tRNA(Gln) amidotransferase subunit A, mitochondrial (Qrsl1) of Rattus norvegicus (Rat).